The chain runs to 92 residues: Small ribosomal subunit protein uS19 (92 aa).

Belongs to the universal ribosomal protein uS19 family.

Functionally, protein S19 forms a complex with S13 that binds strongly to the 16S ribosomal RNA. This Rhodospirillum centenum (strain ATCC 51521 / SW) protein is Small ribosomal subunit protein uS19.